We begin with the raw amino-acid sequence, 632 residues long: Phosphatidylinositol 3,4,5-trisphosphate 3-phosphatase and protein-tyrosine-phosphatase PTEN2B (632 aa).

The span at 1–12 shows a compositional bias: polar residues; the sequence is METDPANSSSKS. A disordered region spans residues 1–98; sequence METDPANSSS…RESPPSIFSS (98 aa). Positions 39–48 are enriched in basic and acidic residues; that stretch reads SAEREAHEDS. Over residues 63–73 the composition is skewed to polar residues; sequence MPASSTGSEPL. Low complexity predominate over residues 87-98; sequence SPRESPPSIFSS. A Phosphatase tensin-type domain is found at 189 to 368; it reads RRYQEGEFDL…KYYERVQNQF (180 aa). Cys-307 (phosphocysteine intermediate) is an active-site residue. The region spanning 375 to 502 is the C2 tensin-type domain; that stretch reads ERRCMLRGFR…FHVEIVMIEP (128 aa). The tract at residues 504-603 is disordered; the sequence is NSQPTKSKSD…SGHYNPIPNN (100 aa). Residues 505 to 527 are compositionally biased toward low complexity; it reads SQPTKSKSDSTQQQSQSSSSADS. Residues 535–549 are compositionally biased toward acidic residues; that stretch reads KDDDVFSDSDGEEEG. Residue Ser-541 is modified to Phosphoserine. Residues 550–571 are compositionally biased toward polar residues; sequence NSQSYSTNEKTASSMHTTSKPH. The segment covering 584–594 has biased composition (low complexity); the sequence is ANRSVTSSSSS.

This sequence belongs to the PTEN phosphatase protein family. In terms of tissue distribution, expressed, at low levels, in seedlings, roots, stems, leaves, flowers and siliques. However, at protein level, not observed in older leaves, flowers and siliques.

It catalyses the reaction O-phospho-L-tyrosyl-[protein] + H2O = L-tyrosyl-[protein] + phosphate. It carries out the reaction a 1,2-diacyl-sn-glycero-3-phospho-(1D-myo-inositol-3,4,5-trisphosphate) + H2O = a 1,2-diacyl-sn-glycero-3-phospho-(1D-myo-inositol-4,5-bisphosphate) + phosphate. In terms of biological role, protein tyrosine phosphatase that also exhibits a weak lipid phosphatase activity towards PtdIns(3)P. The polypeptide is Phosphatidylinositol 3,4,5-trisphosphate 3-phosphatase and protein-tyrosine-phosphatase PTEN2B (Arabidopsis thaliana (Mouse-ear cress)).